The primary structure comprises 253 residues: Cyclin-C1-1 (253 aa).

It belongs to the cyclin family. Cyclin C subfamily.

This chain is Cyclin-C1-1 (CYCC1-1), found in Arabidopsis thaliana (Mouse-ear cress).